We begin with the raw amino-acid sequence, 948 residues long: Protocadherin alpha-2 (948 aa).

The first 22 residues, 1–22 (MASSIRRGLGAWTRLLSLLLLA), serve as a signal peptide directing secretion. At 23 to 697 (AWEVGSGQLR…GSEATLVDVN (675 aa)) the chain is on the extracellular side. 6 consecutive Cadherin domains span residues 30–133 (QLRY…PPVF), 157–242 (ASDA…EPTF), 243–350 (AQSV…TPEV), 351–455 (SITS…APAF), 456–565 (AQPE…APAL), and 588–678 (GHVV…APKA). Asn257, Asn265, Asn362, and Asn548 each carry an N-linked (GlcNAc...) asparagine glycan. A helical transmembrane segment spans residues 698 to 718 (VYLIIAICAVSSLLVLTVLLY). Over 719–948 (TALRCSVPAT…GNSTTDNSDQ (230 aa)) the chain is Cytoplasmic. Residues 734–737 (PGKP) form a PXXP 1 repeat. The tract at residues 734 to 892 (PGKPTLVCSS…PDKFIIPGSP (159 aa)) is 5 X 4 AA repeats of P-X-X-P. Disordered regions lie at residues 755–801 (RQRV…RQPN), 829–854 (GPGG…EVSP), and 868–948 (KYGP…NSDQ). A compositionally biased stretch (basic and acidic residues) spans 783 to 795 (AEEKQLSESEYVG). PXXP repeat units follow at residues 797-800 (PRQP), 830-833 (PGGP), 871-874 (PGNP), and 889-892 (PGSP). The segment covering 907 to 921 (DKSDFITFGKKEETK) has biased composition (basic and acidic residues).

It is found in the cell membrane. In terms of biological role, potential calcium-dependent cell-adhesion protein. May be involved in the establishment and maintenance of specific neuronal connections in the brain. In Pan troglodytes (Chimpanzee), this protein is Protocadherin alpha-2 (PCDHA2).